The sequence spans 229 residues: Prolactin (229 aa).

Positions 1 to 30 are cleaved as a signal peptide; sequence MDSKGSSQKGSRLLLLLVVSNLLLCQGVVS. A disulfide bridge links Cys-34 with Cys-41. Phosphoserine occurs at positions 56, 64, and 120. 2 disulfides stabilise this stretch: Cys-88–Cys-204 and Cys-221–Cys-229.

The protein belongs to the somatotropin/prolactin family. As to quaternary structure, interacts with PRLR.

The protein resides in the secreted. In terms of biological role, prolactin acts primarily on the mammary gland by promoting lactation. This Bos taurus (Bovine) protein is Prolactin (PRL).